Consider the following 416-residue polypeptide: MHGKLLPLAGLYLVQGLPYGLQSSLLPILLRARGLSLTRVGLTKGLYAPWLLKLAWAPLVDRRGTPRVWLTFSTVCLGLVCGLLAVLPPPQAGQTGLPTTVMGLLLLLNLGAAVQDVALDTLAVQLLEPKELGPGNTVQVVAYKLGSALAGGGLLVFFPTLSWPLLFLLLTATYWLAAALAWAAPALGRLSRPQVSEHTPHTSYLLQDLLAVPGTLWTAGFVLTYKMGEQGAGSLFPLLLLDHGASASDLGLWSGLGAATCSIAGSSLGGALLARHCSHPRQPLKLLRSVLQLRLGGLACQTALLLHLNTPGASLDPGTVMRGAALLSLCLQQFLGGVVTTATFTVMMHCSQLAPRALQATHYSFLATLELLGKLLPGTLAGVLADGLGPRLCFAAFLVLSALPVLDLRLAPSNLT.

The next 12 helical transmembrane spans lie at 10–30 (GLYL…PILL), 40–60 (VGLT…APLV), 68–88 (VWLT…AVLP), 99–119 (TTVM…DVAL), 139–158 (QVVA…LVFF), 170–190 (LTAT…LGRL), 204–224 (YLLQ…FVLT), 252–272 (LWSG…GGAL), 295–315 (LGGL…GASL), 324–344 (AALL…TATF), 365–385 (FLAT…GVLA), and 392–412 (LCFA…RLAP).

It belongs to the major facilitator superfamily.

It is found in the membrane. The chain is Major facilitator superfamily domain-containing protein 3 (Mfsd3) from Rattus norvegicus (Rat).